The chain runs to 28 residues: Humanin-like 2 (28 aa).

The protein belongs to the humanin family. As to expression, highly expressed in testis. Also expressed in kidney, heart, skeletal muscles and brain.

Its subcellular location is the secreted. It localises to the cytoplasm. Functionally, plays a role as a neuroprotective and antiapoptotic factor. The protein is Humanin-like 2 of Homo sapiens (Human).